The primary structure comprises 485 residues: Glutamate--tRNA ligase (485 aa).

Positions 11 to 21 (PSPTGLLHIGN) match the 'HIGH' region motif. The 'KMSKS' region motif lies at 255–259 (KLSKR). K258 provides a ligand contact to ATP.

The protein belongs to the class-I aminoacyl-tRNA synthetase family. Glutamate--tRNA ligase type 1 subfamily. As to quaternary structure, monomer.

It is found in the cytoplasm. The enzyme catalyses tRNA(Glu) + L-glutamate + ATP = L-glutamyl-tRNA(Glu) + AMP + diphosphate. Catalyzes the attachment of glutamate to tRNA(Glu) in a two-step reaction: glutamate is first activated by ATP to form Glu-AMP and then transferred to the acceptor end of tRNA(Glu). The sequence is that of Glutamate--tRNA ligase from Streptococcus sanguinis (strain SK36).